Consider the following 481-residue polypeptide: Ribosomal RNA small subunit methyltransferase F (481 aa).

S-adenosyl-L-methionine-binding positions include 119–125 (ASAPGSK), E143, D170, and D188. The Nucleophile role is filled by C241.

It belongs to the class I-like SAM-binding methyltransferase superfamily. RsmB/NOP family.

Its subcellular location is the cytoplasm. The catalysed reaction is cytidine(1407) in 16S rRNA + S-adenosyl-L-methionine = 5-methylcytidine(1407) in 16S rRNA + S-adenosyl-L-homocysteine + H(+). Specifically methylates the cytosine at position 1407 (m5C1407) of 16S rRNA. This is Ribosomal RNA small subunit methyltransferase F from Shewanella sp. (strain MR-4).